The sequence spans 254 residues: Glc operon transcriptional activator (254 aa).

The HTH gntR-type domain maps to Arg-6–Leu-74. A DNA-binding region (H-T-H motif) is located at residues Glu-34 to Thr-53.

Transcriptional activator of the glcDEFGB operon which is associated with glycolate utilization, and encodes malate synthase G and the genes needed for glycolate oxidase activity. Also negatively regulates the transcription of its own gene. Glycolate acts as an effector, but GlcC can also use acetate as an alternative effector. This Escherichia coli O6:H1 (strain CFT073 / ATCC 700928 / UPEC) protein is Glc operon transcriptional activator (glcC).